We begin with the raw amino-acid sequence, 119 residues long: Ribonuclease P protein component (119 aa).

The protein belongs to the RnpA family. Consists of a catalytic RNA component (M1 or rnpB) and a protein subunit.

It carries out the reaction Endonucleolytic cleavage of RNA, removing 5'-extranucleotides from tRNA precursor.. In terms of biological role, RNaseP catalyzes the removal of the 5'-leader sequence from pre-tRNA to produce the mature 5'-terminus. It can also cleave other RNA substrates such as 4.5S RNA. The protein component plays an auxiliary but essential role in vivo by binding to the 5'-leader sequence and broadening the substrate specificity of the ribozyme. The sequence is that of Ribonuclease P protein component from Yersinia enterocolitica serotype O:8 / biotype 1B (strain NCTC 13174 / 8081).